We begin with the raw amino-acid sequence, 101 residues long: Large ribosomal subunit protein uL23 (101 aa).

Belongs to the universal ribosomal protein uL23 family. In terms of assembly, part of the 50S ribosomal subunit. Contacts protein L29, and trigger factor when it is bound to the ribosome.

In terms of biological role, one of the early assembly proteins it binds 23S rRNA. One of the proteins that surrounds the polypeptide exit tunnel on the outside of the ribosome. Forms the main docking site for trigger factor binding to the ribosome. This chain is Large ribosomal subunit protein uL23, found in Corynebacterium kroppenstedtii (strain DSM 44385 / JCM 11950 / CIP 105744 / CCUG 35717).